A 467-amino-acid polypeptide reads, in one-letter code: Putative serine/threonine-protein kinase R400 (467 aa).

A Protein kinase domain is found at 99–467; the sequence is GVKLIYIKSG…STGQKPTKKV (369 aa). Residues 105 to 113 and lysine 129 each bind ATP; that span reads IKSGTTGHT. The Proton acceptor role is filled by aspartate 272. Positions 443–467 are disordered; sequence LFQQGNGSKQPVPKKSTGQKPTKKV. The span at 458–467 shows a compositional bias: polar residues; it reads STGQKPTKKV.

Belongs to the protein kinase superfamily. Ser/Thr protein kinase family.

It is found in the virion. The catalysed reaction is L-seryl-[protein] + ATP = O-phospho-L-seryl-[protein] + ADP + H(+). The enzyme catalyses L-threonyl-[protein] + ATP = O-phospho-L-threonyl-[protein] + ADP + H(+). The polypeptide is Putative serine/threonine-protein kinase R400 (Acanthamoeba polyphaga mimivirus (APMV)).